The following is a 529-amino-acid chain: Peptide chain release factor 3 (529 aa).

Positions 11–280 (AKRRTFAIIS…GLVEWAPAPM (270 aa)) constitute a tr-type G domain. Residues 20-27 (SHPDAGKT), 88-92 (DTPGH), and 142-145 (NKLD) each bind GTP.

Belongs to the TRAFAC class translation factor GTPase superfamily. Classic translation factor GTPase family. PrfC subfamily.

The protein resides in the cytoplasm. Its function is as follows. Increases the formation of ribosomal termination complexes and stimulates activities of RF-1 and RF-2. It binds guanine nucleotides and has strong preference for UGA stop codons. It may interact directly with the ribosome. The stimulation of RF-1 and RF-2 is significantly reduced by GTP and GDP, but not by GMP. The polypeptide is Peptide chain release factor 3 (Escherichia coli O8 (strain IAI1)).